A 280-amino-acid chain; its full sequence is Type II restriction enzyme MboI (280 aa).

Belongs to the DpnII type II restriction endonuclease family.

The enzyme catalyses Endonucleolytic cleavage of DNA to give specific double-stranded fragments with terminal 5'-phosphates.. Its function is as follows. A P subtype restriction enzyme that recognizes the double-stranded unmethylated sequence 5'-GATC-3' and cleaves before G-1. In Moraxella bovis, this protein is Type II restriction enzyme MboI (mboIR).